Here is a 260-residue protein sequence, read N- to C-terminus: 3'-5' ssDNA/RNA exonuclease TatD (260 aa).

A divalent metal cation contacts are provided by Glu91, His127, and His152.

This sequence belongs to the metallo-dependent hydrolases superfamily. TatD-type hydrolase family. TatD subfamily. Monomer. It depends on Mg(2+) as a cofactor. Mn(2+) is required as a cofactor.

Its subcellular location is the cytoplasm. Functionally, 3'-5' exonuclease that prefers single-stranded DNA and RNA. May play a role in the H(2)O(2)-induced DNA damage repair. This chain is 3'-5' ssDNA/RNA exonuclease TatD, found in Escherichia coli (strain K12).